The primary structure comprises 289 residues: Protoheme IX farnesyltransferase (289 aa).

Helical transmembrane passes span Leu13–Ala33, Val40–Phe60, Ile85–Leu105, Leu111–Phe131, Asn139–Gly159, Ile168–Leu188, Ser212–Pro232, Met234–Tyr254, and Phe269–Ile289.

It belongs to the UbiA prenyltransferase family. Protoheme IX farnesyltransferase subfamily.

Its subcellular location is the cell inner membrane. It catalyses the reaction heme b + (2E,6E)-farnesyl diphosphate + H2O = Fe(II)-heme o + diphosphate. It participates in porphyrin-containing compound metabolism; heme O biosynthesis; heme O from protoheme: step 1/1. In terms of biological role, converts heme B (protoheme IX) to heme O by substitution of the vinyl group on carbon 2 of heme B porphyrin ring with a hydroxyethyl farnesyl side group. The protein is Protoheme IX farnesyltransferase of Leptospira borgpetersenii serovar Hardjo-bovis (strain JB197).